Consider the following 265-residue polypeptide: MIKWPWKVQESAHQTALPWQEALSIPLLTCLTEQEQSKLVTLAERFLQQKRLVPLQGFELDSLRSCRIALLFCLPVLELGLEWLDGFHEVLIYPAPFVVDDEWEDDIGLVHNQRIVQSGQSWQQGPIVLNWLDIQDSFDASGFNLIIHEVAHKLDTRNGDRASGVPFIPLREVAGWEHDLHAAMNNIQEEIELVGENAASIDAYAASDPAECFAVLSEYFFSAPELFAPRFPSLWQRFCQFYQQDPLQRLHRTNDTDSFSATNVH.

Zn(2+) contacts are provided by His111, His148, His152, and Glu211.

Belongs to the MtfA family. As to quaternary structure, interacts with Mlc. The cofactor is Zn(2+).

The protein resides in the cytoplasm. Involved in the modulation of the activity of the glucose-phosphotransferase system (glucose-PTS). Interacts with the transcriptional repressor Mlc, preventing its interaction with DNA and leading to the modulation of expression of genes regulated by Mlc, including ptsG, which encodes the PTS system glucose-specific EIICB component. Its function is as follows. Shows zinc-dependent metallopeptidase activity. The chain is Mlc titration factor A from Escherichia coli O8 (strain IAI1).